The sequence spans 346 residues: Envelope glycoprotein M (346 aa).

Topologically, residues 1–12 (MALSRVDVINMR) are intravirion. The chain crosses the membrane as a helical span at residues 13-33 (IWVLSIICACLTYVNVTVHLV). Topologically, residues 34 to 76 (AVHFPNLGFPCAYYEINDMKAINLSIRNDIRSLTPQLYLNPIQ) are virion surface. The helical transmembrane segment at 77–97 (LICYVVFMDICFFFILVYYIV) threads the bilayer. Topologically, residues 98–117 (CCVKVFSSEKTPNINQSTRD) are intravirion. The chain crosses the membrane as a helical span at residues 118–140 (ITWMGDSLSCFQFVLTMDTYQFF). Residues 141–147 (VTCLSFR) are Virion surface-facing. Residues 148-168 (LVTLAAFTYCLFFICFTAFTL) traverse the membrane as a helical segment. Residues 169–199 (TMITQYQSSERSFFVLKRIHPKLKGTIKYKT) are Intravirion-facing. The chain crosses the membrane as a helical span at residues 200-220 (IIINMIELMLGFSSMVFAITI). The Virion surface portion of the chain corresponds to 221–236 (CLGLGNNFYIKSSTVA). Residues 237 to 257 (FASINTFFVMSFVYSLVIELI) traverse the membrane as a helical segment. Residues 258–263 (LHQYVK) lie on the Intravirion side of the membrane. A helical transmembrane segment spans residues 264–284 (VQFGLHFGILFGILGLTYPIL). The Virion surface portion of the chain corresponds to 285 to 293 (KYDSLFKTE). A helical membrane pass occupies residues 294–314 (WTVKFIVNLAVITIVCLSFII). Residues 315–346 (CRLIRFFMRKHHNYKKLPTTVEDLDVLEEANE) lie on the Intravirion side of the membrane.

It belongs to the herpesviridae glycoprotein M family. In terms of assembly, interacts (via N-terminus) with gN (via N-terminus). The gM-gN heterodimer forms the gCII complex.

It is found in the virion membrane. The protein resides in the host Golgi apparatus. Its subcellular location is the host trans-Golgi network. It localises to the host endosome membrane. The protein localises to the host nucleus inner membrane. Its function is as follows. Envelope glycoprotein important for virion assembly and egress. Plays a role in the correct incorporation of gH-gL into virion membrane. Directs the glycoprotein N (gN) to the host trans-Golgi network. This Homo sapiens (Human) protein is Envelope glycoprotein M.